We begin with the raw amino-acid sequence, 561 residues long: Carboxylesterase patB (561 aa).

Positions 1-19 are cleaved as a signal peptide; that stretch reads MQIINWASLLLVTWETVVA. Asparagine 38, asparagine 69, and asparagine 109 each carry an N-linked (GlcNAc...) asparagine glycan. Serine 263 (acyl-ester intermediate) is an active-site residue. Residue serine 263 participates in substrate binding. An N-linked (GlcNAc...) asparagine glycan is attached at asparagine 316. Glutamate 385 serves as the catalytic Charge relay system. N-linked (GlcNAc...) asparagine glycosylation is found at asparagine 393, asparagine 412, asparagine 429, and asparagine 496.

Belongs to the type-B carboxylesterase/lipase family.

The protein resides in the cytoplasm. Its subcellular location is the cytosol. The catalysed reaction is a carboxylic ester + H2O = an alcohol + a carboxylate + H(+). It participates in mycotoxin biosynthesis; patulin biosynthesis. Functionally, carboxylesterase; part of the gene cluster that mediates the biosynthesis of patulin, an acetate-derived tetraketide mycotoxin produced by several fungal species that shows antimicrobial properties against several bacteria. The function of patB in patulin synthesis has still to be characterized. The pathway begins with the synthesis of 6-methylsalicylic acid by the polyketide synthase (PKS) patK via condensation of acetate and malonate units. The 6-methylsalicylic acid decarboxylase patG then catalyzes the decarboxylation of 6-methylsalicylic acid to yield m-cresol (also known as 3-methylphenol). These first reactions occur in the cytosol. The intermediate m-cresol is then transported into the endoplasmic reticulum where the cytochrome P450 monooxygenase patH converts it to m-hydroxybenzyl alcohol, which is further converted to gentisyl alcohol by the cytochrome P450 monooxygenase patI. The oxidoreductases patJ and patO further convert gentisyl alcohol to isoepoxydon in the vacuole. PatN catalyzes then the transformation of isoepoxydon into phyllostine. The cluster protein patF is responsible for the conversion from phyllostine to neopatulin whereas the alcohol dehydrogenase patD converts neopatulin to E-ascladiol. The steps between isoepoxydon and E-ascladiol occur in the cytosol, and E-ascladiol is probably secreted to the extracellular space by one of the cluster-specific transporters patC or patM. Finally, the secreted patulin synthase patE catalyzes the conversion of E-ascladiol to patulin. In Penicillium expansum (Blue mold rot fungus), this protein is Carboxylesterase patB.